The sequence spans 180 residues: Translation initiation factor IF-3 (180 aa).

This sequence belongs to the IF-3 family. In terms of assembly, monomer.

The protein localises to the cytoplasm. IF-3 binds to the 30S ribosomal subunit and shifts the equilibrium between 70S ribosomes and their 50S and 30S subunits in favor of the free subunits, thus enhancing the availability of 30S subunits on which protein synthesis initiation begins. The chain is Translation initiation factor IF-3 from Escherichia coli (strain K12 / MC4100 / BW2952).